Here is a 258-residue protein sequence, read N- to C-terminus: Oxidoreductase fscI (258 aa).

Leu-34, Arg-59, Asp-82, Asn-109, and Lys-141 together coordinate NADP(+). Ser-163 functions as the Proton donor in the catalytic mechanism. Arg-193 is an NADP(+) binding site.

It belongs to the short-chain dehydrogenases/reductases (SDR) family.

The protein operates within secondary metabolite biosynthesis. In terms of biological role, oxidoreductase; part of the fragmented gene cluster that mediates the biosynthesis of fusarochromene, a tryptophan-derived metabolite closely related to a group of mycotoxins including fusarochromanone. Within the pathway, fscI catalyzes the formation of the chromene ring from the prenyl moity added by the prenyltransferase fscG. The first step of the pathway is the epimerization of L-tryptophan to D-tryptophan in the presence of the NRPS-like tryptophan epimerase fscC. D-tryptophan is subsequently hydroxylated by the tryptophan 6-hydroxylase fscE to yield 6-hydroxytryptophan. The pyrrole ring undergoes cleavaged by the tryptophan 2,3-dioxygenase fscD and is finally converted to 4-hydroxykyrunenine by the hydrolase fscH. The NRPS-like oxidoreductase fscA reduces the carboxyl group to primary alcohol and the DMATS-type prenyltransferase fscG performs prenylation, followed by the formation of a chromene ring catalyzed by the oxidoreductase fscI, which leads to desacetylfusarochromene. Epoxidation by fscF and rearrangement reactions of chromene double bonds convert compound desacetylfusarochromene to fusarochromanones. Although specific acetyltransferases were not found near the fsc gene cluster, several predicted enzymes containing the N-acetyltransferase superfamily domain are present in the genome of F.equiseti. These predicted enzymes may have the potential to convert desacetylfusarochromene to fusarochromene. The sequence is that of Oxidoreductase fscI from Fusarium equiseti (Fusarium scirpi).